Here is a 199-residue protein sequence, read N- to C-terminus: Holliday junction branch migration complex subunit RuvA (199 aa).

Positions 1–64 (MIGRISGLLL…EDGHFLYGFA (64 aa)) are domain I. The tract at residues 65 to 143 (TDEERTAFRQ…KALPQVAGAR (79 aa)) is domain II. A flexible linker region spans residues 144 to 154 (LAAVAGGAPDA). The segment at 154–199 (AKSDILNALLALGYNEKEALGAMKGLAEDTGVSDGIRQALKLLSKA) is domain III.

It belongs to the RuvA family. Homotetramer. Forms an RuvA(8)-RuvB(12)-Holliday junction (HJ) complex. HJ DNA is sandwiched between 2 RuvA tetramers; dsDNA enters through RuvA and exits via RuvB. An RuvB hexamer assembles on each DNA strand where it exits the tetramer. Each RuvB hexamer is contacted by two RuvA subunits (via domain III) on 2 adjacent RuvB subunits; this complex drives branch migration. In the full resolvosome a probable DNA-RuvA(4)-RuvB(12)-RuvC(2) complex forms which resolves the HJ.

Its subcellular location is the cytoplasm. Functionally, the RuvA-RuvB-RuvC complex processes Holliday junction (HJ) DNA during genetic recombination and DNA repair, while the RuvA-RuvB complex plays an important role in the rescue of blocked DNA replication forks via replication fork reversal (RFR). RuvA specifically binds to HJ cruciform DNA, conferring on it an open structure. The RuvB hexamer acts as an ATP-dependent pump, pulling dsDNA into and through the RuvAB complex. HJ branch migration allows RuvC to scan DNA until it finds its consensus sequence, where it cleaves and resolves the cruciform DNA. The chain is Holliday junction branch migration complex subunit RuvA from Azoarcus sp. (strain BH72).